A 417-amino-acid chain; its full sequence is E3 ubiquitin-protein ligase RNF135 (417 aa).

An RING-type zinc finger spans residues 21-67 (CIICQGLLDQPTTLPCGHSFCLRCLHDLWVSKRGAVDGCPWACPICR). Disordered stretches follow at residues 95–118 (EVEA…TVQK) and 143–173 (TQRP…SLDS). Coiled-coil stretches lie at residues 121-145 (TNVI…QTQR) and 180-204 (SISQ…QGSV). The segment covering 143 to 164 (TQRPNLGSGQDNAQGTPPTDSS) has biased composition (polar residues). One can recognise a B30.2/SPRY domain in the interval 225–417 (PDQRRPAPRK…NYLEIKQLNT (193 aa)).

As to quaternary structure, homodimer. Interacts (homodimer) with RIGI (double-stranded RNA-bound oligomeric form); involved in both RIGI ubiquitination, oligomerization into filaments associated with viral RNAs and the bridging of these filaments. Interacts with UBE2D3 and UBE2N; E2 ubiquitin ligases involved in RNF135-mediated ubiquitination of RIGI and activation of the RIG-I signaling pathway. Interacts with PCBP2. Ubiquitously expressed.

The protein resides in the cytoplasm. It is found in the stress granule. The catalysed reaction is S-ubiquitinyl-[E2 ubiquitin-conjugating enzyme]-L-cysteine + [acceptor protein]-L-lysine = [E2 ubiquitin-conjugating enzyme]-L-cysteine + N(6)-ubiquitinyl-[acceptor protein]-L-lysine.. It participates in protein modification; protein ubiquitination. Functionally, E2-dependent E3 ubiquitin-protein ligase that functions as a RIGI coreceptor in the sensing of viral RNAs in cell cytoplasm and the activation of the antiviral innate immune response. Together with the UBE2D3, UBE2N and UB2V1 E2 ligases, catalyzes the 'Lys-63'-linked polyubiquitination of RIGI oligomerized on viral RNAs, an essential step in the activation of the RIG-I signaling pathway. Through a ubiquitin-independent parallel mechanism, which consists in bridging RIGI filaments forming on longer viral RNAs, further activates the RIG-I signaling pathway. This second mechanism that synergizes with the ubiquitin-dependent one would thereby allow an RNA length-dependent regulation of the RIG-I signaling pathway. Associated with the E2 ligase UBE2N, also constitutively synthesizes unanchored 'Lys-63'-linked polyubiquitin chains that may also activate the RIG-I signaling pathway. It is not involved in the innate immune response against DNA viruses. In Mus musculus (Mouse), this protein is E3 ubiquitin-protein ligase RNF135.